We begin with the raw amino-acid sequence, 673 residues long: MCSRVPLLLPLLLLLALGPGVQGCPSGCQCSQPQTVFCTARQGTTVPRDVPPDTVGLYVFENGITMLDAGSFAGLPGLQLLDLSQNQIASLPSGVFQPLANLSNLDLTANRLHEITNETFRGLRRLERLYLGKNRIRHIQPGAFDTLDRLLELKLQDNELRALPPLRLPRLLLLDLSHNSLLALEPGILDTANVEALRLAGLGLQQLDEGLFSRLRNLHDLDVSDNQLERVPPVIRGLRGLTRLRLAGNTRIAQLRPEDLAGLAALQELDVSNLSLQALPGDLSGLFPRLRLLAAARNPFNCVCPLSWFGPWVRESHVTLASPEETRCHFPPKNAGRLLLELDYADFGCPATTTTATVPTTRPVVREPTALSSSLAPTWLSPTEPATEAPSPPSTAPPTVGPVPQPQDCPPSTCLNGGTCHLGTRHHLACLCPEGFTGLYCESQMGQGTRPSPTPVTPRPPRSLTLGIEPVSPTSLRVGLQRYLQGSSVQLRSLRLTYRNLSGPDKRLVTLRLPASLAEYTVTQLRPNATYSVCVMPLGPGRVPEGEEACGEAHTPPAVHSNHAPVTQAREGNLPLLIAPALAAVLLAALAAVGAAYCVRRGRAMAAAAQDKGQVGPGAGPLELEGVKVPLEPGPKATEGGGEALPSGSECEVPLMGFPGPGLQSPLHAKPYI.

The signal sequence occupies residues 1–23 (MCSRVPLLLPLLLLLALGPGVQG). Residues 24–51 (CPSGCQCSQPQTVFCTARQGTTVPRDVP) enclose the LRRNT domain. Residues 24 to 575 (CPSGCQCSQP…VTQAREGNLP (552 aa)) are Extracellular-facing. 10 LRR repeats span residues 52 to 74 (PDTVGLYVFENGITMLDAGSFAG), 77 to 98 (GLQLLDLSQNQIASLPSGVFQP), 101 to 122 (NLSNLDLTANRLHEITNETFRG), 125 to 146 (RLERLYLGKNRIRHIQPGAFDT), 149 to 170 (RLLELKLQDNELRALPPLRLPR), 171 to 191 (LLLLDLSHNSLLALEPGILDT), 193 to 214 (NVEALRLAGLGLQQLDEGLFSR), 217 to 238 (NLHDLDVSDNQLERVPPVIRGL), 240 to 262 (GLTRLRLAGNTRIAQLRPEDLAG), and 265 to 287 (ALQELDVSNLSLQALPGDLSGLF). N101 carries N-linked (GlcNAc...) asparagine glycosylation. N117 is a glycosylation site (N-linked (GlcNAc...) (complex) asparagine). A glycan (N-linked (GlcNAc...) asparagine) is linked at N273. Residues 298–351 (NPFNCVCPLSWFGPWVRESHVTLASPEETRCHFPPKNAGRLLLELDYADFGCPA) enclose the LRRCT domain. Over residues 358-370 (VPTTRPVVREPTA) the composition is skewed to low complexity. The segment at 358 to 404 (VPTTRPVVREPTALSSSLAPTWLSPTEPATEAPSPPSTAPPTVGPVP) is disordered. Over residues 390-404 (PSPPSTAPPTVGPVP) the composition is skewed to pro residues. Positions 405-442 (QPQDCPPSTCLNGGTCHLGTRHHLACLCPEGFTGLYCE) constitute an EGF-like domain. Intrachain disulfides connect C409-C420, C414-C430, and C432-C441. The Fibronectin type-III domain maps to 460-558 (PPRSLTLGIE…ACGEAHTPPA (99 aa)). N500 and N528 each carry an N-linked (GlcNAc...) asparagine glycan. Residues 576-596 (LLIAPALAAVLLAALAAVGAA) traverse the membrane as a helical segment. The Cytoplasmic segment spans residues 597–673 (YCVRRGRAMA…QSPLHAKPYI (77 aa)).

In terms of assembly, interacts with TGFB1, TGFB2 and TGFB3. N-glycosylated. N-glycan heterogeneity at Asn-117: Hex5HexNAc4 (minor), dHex1Hex5HexNAc4 (major), Hex6HexNAc5 (minor) and dHex1Hex6HexNAc5 (minor). As to expression, expressed at highest levels in aorta, at intermediate levels in kidney and placenta and at lowest levels in brain, heart, liver, lung and skeletal muscle. Within the aorta, the strongest expression is found in the tunica media of the proximal ascending aorta, the descending thoracic aorta, the abdominal aorta and the coronary arteries. Within the kidney, expression is found in the interstitial cells.

The protein localises to the membrane. It is found in the secreted. In terms of biological role, may act as an inhibitor of TGF-beta signaling. This is Vasorin (VASN) from Homo sapiens (Human).